The primary structure comprises 734 residues: Transcription factor EMB1444 (734 aa).

Residues 537–566 (QFPTSLEIPKKNKKRAKPGESSRPRPRDRQ) are disordered. Residues 548-555 (NKKRAKPG) carry the Nuclear localization signal motif. In terms of domain architecture, bHLH spans 552–601 (AKPGESSRPRPRDRQLIQDRIKELRELVPNGSKCSIDSLLECTIKHMLFL). Basic and acidic residues predominate over residues 553-566 (KPGESSRPRPRDRQ).

It belongs to the bHLH protein family. LHW subfamily. Homodimer.

It localises to the nucleus. In terms of biological role, transcription factor that may regulate root development. The chain is Transcription factor EMB1444 from Arabidopsis thaliana (Mouse-ear cress).